Consider the following 942-residue polypeptide: Mitogen-activated protein kinase kinase kinase A (942 aa).

The region spanning 15 to 96 (FIRIKCILGD…NPTKIISTKF (82 aa)) is the PB1 domain. Residues 107-144 (PLSSSLSPTQSLILNNNNNNNNNNNNNNNNNNNNNNNN) form a disordered region. The 260-residue stretch at 170-429 (WQKGQILGRG…ANQLLKHPFI (260 aa)) folds into the Protein kinase domain. ATP-binding positions include 176-184 (LGRGGYGSV) and K199. D297 functions as the Proton acceptor in the catalytic mechanism. Low complexity predominate over residues 441–486 (ISPTTTLSTNTTNTTATTTTTNNATNSNINQQQQQQQQQPPTRTQR). The interval 441–512 (ISPTTTLSTN…ISTSTSSSSS (72 aa)) is disordered. The segment covering 487 to 498 (VSISAGSSNNKR) has biased composition (polar residues). The span at 500–512 (TPPISTSTSSSSS) shows a compositional bias: low complexity. A helical membrane pass occupies residues 513 to 533 (SILNNFSINIILPINLIILIF). One can recognise an F-box domain in the interval 518 to 564 (FSINIILPINLIILIFREIKPNFVNTLSRVCKHWKQIIDDDELWNKY). 7 WD repeats span residues 607 to 646 (GHDKGVFCVKLIDDQGMVLSGGEDKKLKVWDISGNHHHNH), 690 to 733 (GHSG…TLFT), 736 to 778 (NHQE…STLR), 780 to 825 (HTGG…KVRS), 828 to 865 (QHTEDVLCCYVFDQKVVTGSCDGTIKLWDIGTGKTIST), 872 to 909 (RQKNYVWTVQFDQSKIISSGKTGIIRIWDIYNERDSRS), and 912 to 942 (GHHETIFSLQFNNQKLITGSLDKLVKIWSID).

The protein belongs to the protein kinase superfamily. STE Ser/Thr protein kinase family. MAP kinase kinase kinase subfamily. As to quaternary structure, interacts with ubcB and ubpB. Mg(2+) serves as cofactor. Post-translationally, ubcB and ubpB differentially control ubiquitination/deubiquitination and degradation in a cell-type-specific and temporally regulated manner.

It is found in the membrane. It carries out the reaction L-seryl-[protein] + ATP = O-phospho-L-seryl-[protein] + ADP + H(+). The enzyme catalyses L-threonyl-[protein] + ATP = O-phospho-L-threonyl-[protein] + ADP + H(+). In terms of biological role, regulates cell-type differentiation and spatial patterning, required for the proper induction and maintenance of prespore cell differentiation. This is Mitogen-activated protein kinase kinase kinase A from Dictyostelium discoideum (Social amoeba).